The chain runs to 605 residues: Elongation factor 4 (605 aa).

The tr-type G domain maps to 9-192 (SRIRNFCIIA…AIIARVPAPA (184 aa)). GTP contacts are provided by residues 21-26 (DHGKST) and 139-142 (NKID).

This sequence belongs to the TRAFAC class translation factor GTPase superfamily. Classic translation factor GTPase family. LepA subfamily.

Its subcellular location is the cell inner membrane. It catalyses the reaction GTP + H2O = GDP + phosphate + H(+). In terms of biological role, required for accurate and efficient protein synthesis under certain stress conditions. May act as a fidelity factor of the translation reaction, by catalyzing a one-codon backward translocation of tRNAs on improperly translocated ribosomes. Back-translocation proceeds from a post-translocation (POST) complex to a pre-translocation (PRE) complex, thus giving elongation factor G a second chance to translocate the tRNAs correctly. Binds to ribosomes in a GTP-dependent manner. The protein is Elongation factor 4 of Chlorobium luteolum (strain DSM 273 / BCRC 81028 / 2530) (Pelodictyon luteolum).